The chain runs to 380 residues: Succinyl-diaminopimelate desuccinylase (380 aa).

His69 contributes to the Zn(2+) binding site. The active site involves Asp71. Position 102 (Asp102) interacts with Zn(2+). The active-site Proton acceptor is the Glu135. Zn(2+) contacts are provided by Glu136, Glu164, and His353.

Belongs to the peptidase M20A family. DapE subfamily. In terms of assembly, homodimer. Zn(2+) is required as a cofactor. The cofactor is Co(2+).

It carries out the reaction N-succinyl-(2S,6S)-2,6-diaminopimelate + H2O = (2S,6S)-2,6-diaminopimelate + succinate. It functions in the pathway amino-acid biosynthesis; L-lysine biosynthesis via DAP pathway; LL-2,6-diaminopimelate from (S)-tetrahydrodipicolinate (succinylase route): step 3/3. Catalyzes the hydrolysis of N-succinyl-L,L-diaminopimelic acid (SDAP), forming succinate and LL-2,6-diaminopimelate (DAP), an intermediate involved in the bacterial biosynthesis of lysine and meso-diaminopimelic acid, an essential component of bacterial cell walls. The sequence is that of Succinyl-diaminopimelate desuccinylase from Cereibacter sphaeroides (strain ATCC 17029 / ATH 2.4.9) (Rhodobacter sphaeroides).